The primary structure comprises 354 residues: Ornithine cyclodeaminase (354 aa).

The L-ornithine site is built by arginine 53 and lysine 77. NAD(+) contacts are provided by residues threonine 92, arginine 120, 147–148, aspartate 169, threonine 209, 232–235, lysine 239, and serine 300; these read AQ and VGGD. Position 120 (arginine 120) interacts with L-ornithine. Aspartate 235 lines the L-ornithine pocket. Aspartate 235 acts as the Proton donor/acceptor in catalysis. Valine 301 lines the L-ornithine pocket.

This sequence belongs to the ornithine cyclodeaminase/mu-crystallin family. NAD(+) is required as a cofactor.

The enzyme catalyses L-ornithine = L-proline + NH4(+). It participates in amino-acid biosynthesis; L-proline biosynthesis; L-proline from L-ornithine: step 1/1. Its activity is regulated as follows. Is subject to substrate inhibition. Is regulated by L-arginine, which stimulates enzymatic activity at 0.1-1 mM while inhibits activity at higher concentrations, and has pronounced effects on the optima for pH and temperature and on the Km for L-ornithine. Is not inhibited by L-proline. Its function is as follows. Catalyzes the conversion of L-ornithine into L-proline with release of ammonia. Is involved in the utilization of nopaline, a catabolic pathway that proceeds through L-arginine and L-ornithine to L-proline. Nopaline is a predominant opine in plant cells transformed with Ti plasmid pTiC58. This chain is Ornithine cyclodeaminase, found in Agrobacterium fabrum (strain C58 / ATCC 33970) (Agrobacterium tumefaciens (strain C58)).